Here is a 56-residue protein sequence, read N- to C-terminus: UPF0391 membrane protein Noc_0484 (56 aa).

The next 2 membrane-spanning stretches (helical) occupy residues 6–26 and 29–49; these read VTFL…IAGI and EIAW…LVLG.

This sequence belongs to the UPF0391 family.

Its subcellular location is the cell membrane. This Nitrosococcus oceani (strain ATCC 19707 / BCRC 17464 / JCM 30415 / NCIMB 11848 / C-107) protein is UPF0391 membrane protein Noc_0484.